A 308-amino-acid chain; its full sequence is Aspartate carbamoyltransferase catalytic subunit (308 aa).

Residues R55 and T56 each coordinate carbamoyl phosphate. K83 is an L-aspartate binding site. Residues R105, H133, and Q136 each contribute to the carbamoyl phosphate site. Positions 166 and 223 each coordinate L-aspartate. 2 residues coordinate carbamoyl phosphate: G264 and P265.

Belongs to the aspartate/ornithine carbamoyltransferase superfamily. ATCase family. Heterododecamer (2C3:3R2) of six catalytic PyrB chains organized as two trimers (C3), and six regulatory PyrI chains organized as three dimers (R2).

The enzyme catalyses carbamoyl phosphate + L-aspartate = N-carbamoyl-L-aspartate + phosphate + H(+). Its pathway is pyrimidine metabolism; UMP biosynthesis via de novo pathway; (S)-dihydroorotate from bicarbonate: step 2/3. In terms of biological role, catalyzes the condensation of carbamoyl phosphate and aspartate to form carbamoyl aspartate and inorganic phosphate, the committed step in the de novo pyrimidine nucleotide biosynthesis pathway. The sequence is that of Aspartate carbamoyltransferase catalytic subunit from Salinispora tropica (strain ATCC BAA-916 / DSM 44818 / JCM 13857 / NBRC 105044 / CNB-440).